The primary structure comprises 258 residues: MTGLLNGKVVAITGGVTGIGRAIAIEMARNGAKVVVNHLPSEEQAQLAKELKEEISDGENNVLTIPGDISLPETGRRIVELAVEKFGEINVFVSNAGVCGFREFLEITPETLFQTVNINLNGAFFAIQAAAQQMVKQGKGGSIIGISSISALVGGAHQTHYTPTKAGILSLMQSTACALGKYGIRCNAILPGTISTALNEEDLKDPEKRKYMEGRIPLGRVGDPKDIAGPAIFLASDMSNYVNGAQLLVDGGLFVNLQ.

Residues Ile19, Asp68, and Asn95 each contribute to the NADP(+) site. Active-site proton donor residues include Ser147 and Tyr161. 4 residues coordinate NADP(+): Tyr161, Lys165, Ile194, and Thr196. Lys165 functions as the Lowers pKa of active site Tyr in the catalytic mechanism.

Belongs to the short-chain dehydrogenases/reductases (SDR) family.

The catalysed reaction is L-rhamnofuranose + NAD(+) = L-rhamnono-1,4-lactone + NADH + H(+). NAD-dependent dehydrogenase that has high activity with L-rhamnose and L-lyxose, and shows only low activity with L-mannose. Has no activity with NADP. Catalyzes the first step in an alternative pathway for rhamnose utilization that does not involve phosphorylated intermediates. The sequence is that of L-rhamnose-1-dehydrogenase (DHG2) from Scheffersomyces stipitis (strain ATCC 58785 / CBS 6054 / NBRC 10063 / NRRL Y-11545) (Yeast).